The primary structure comprises 126 residues: Protein K7 (126 aa).

Residues 24–44 traverse the membrane as a helical segment; sequence LPLHLWILCSLLAFLPLLVFI.

Interacts with host CAMLG; this interaction allows efficient apoptosis inhibition. Additionally, interacts with vGPCR/ORF74 and induces its proteasomeal degradation.

It localises to the host membrane. The protein resides in the host mitochondrion. Its function is as follows. Plays a role in the inhibition of host apoptosis to allow completion of the viral lytic replication and may thus favor the maintenance of persistent infection in infected host. In Homo sapiens (Human), this protein is Protein K7 (K7).